The sequence spans 150 residues: Large ribosomal subunit protein bL9 (150 aa).

Belongs to the bacterial ribosomal protein bL9 family.

Functionally, binds to the 23S rRNA. This Staphylococcus aureus (strain NCTC 8325 / PS 47) protein is Large ribosomal subunit protein bL9.